The sequence spans 352 residues: MLSREEQNRCFVPVRRILDNEDLKLFKEGDAYKLIDSFICDLDEAVKDKPISASIPQSSSIEHVLNILDRVGEIKQENPAIDNMGSRFGNPAFQSFYDQVYIETPKLHQVFGIEHNAAMEAGRYFYESFGNRKRIDYGSGHELYFMSWLLILKQLGIFTKNDYPALVVRVFVKYVELMRSLQIFYTLEPAGSHGVWGLDDFHFLPFLFGAAQLVNHKYLRPKHVRDPEILEMCRADYMYLGYVYFLNKLKPSVSLRFHSPMIDDISAVKTWSKVNEGMIKMYRAEVLGKLPIMQHYLFGHLIPASPGMSPAPQDGDDSEVTHVHSHYADCCGIKIPSAISAAKNNGSRIPFD.

It belongs to the PTPA-type PPIase family.

It localises to the cytoplasm. It catalyses the reaction [protein]-peptidylproline (omega=180) = [protein]-peptidylproline (omega=0). In terms of biological role, PPIases accelerate the folding of proteins. It catalyzes the cis-trans isomerization of proline imidic peptide bonds in oligopeptides. Acts as a regulatory subunit for PP2A-like phosphatases modulating their activity or substrate specificity, probably by inducing a conformational change in the catalytic subunit, a direct target of the PPIase. Can reactivate inactive phosphatase PP2A-phosphatase methylesterase complexes (PP2Ai) in presence of ATP and Mg(2+) by dissociating the inactive form from the complex. This is Serine/threonine-protein phosphatase 2A activator 2 (rrd2) from Schizosaccharomyces pombe (strain 972 / ATCC 24843) (Fission yeast).